We begin with the raw amino-acid sequence, 441 residues long: Ribulose bisphosphate carboxylase large chain (441 aa).

Lys5 carries the post-translational modification N6,N6,N6-trimethyllysine. Residues Asn114 and Thr164 each coordinate substrate. The active-site Proton acceptor is Lys166. Lys168 contributes to the substrate binding site. Mg(2+) contacts are provided by Lys192, Asp194, and Glu195. An N6-carboxylysine modification is found at Lys192. His285 (proton acceptor) is an active-site residue. Substrate-binding residues include Arg286, His318, and Ser370.

Belongs to the RuBisCO large chain family. Type I subfamily. In terms of assembly, heterohexadecamer of 8 large chains and 8 small chains; disulfide-linked. The disulfide link is formed within the large subunit homodimers. It depends on Mg(2+) as a cofactor. Post-translationally, the disulfide bond which can form in the large chain dimeric partners within the hexadecamer appears to be associated with oxidative stress and protein turnover.

The protein resides in the plastid. Its subcellular location is the chloroplast. It catalyses the reaction 2 (2R)-3-phosphoglycerate + 2 H(+) = D-ribulose 1,5-bisphosphate + CO2 + H2O. It carries out the reaction D-ribulose 1,5-bisphosphate + O2 = 2-phosphoglycolate + (2R)-3-phosphoglycerate + 2 H(+). Functionally, ruBisCO catalyzes two reactions: the carboxylation of D-ribulose 1,5-bisphosphate, the primary event in carbon dioxide fixation, as well as the oxidative fragmentation of the pentose substrate in the photorespiration process. Both reactions occur simultaneously and in competition at the same active site. This Drosera dichrosepala (Rusty sundew) protein is Ribulose bisphosphate carboxylase large chain.